Consider the following 111-residue polypeptide: uncharacterized protein (111 aa).

The region spanning Ile4 to Ala111 is the HIT domain. Residues His96 to His100 carry the Histidine triad motif motif.

This is an uncharacterized protein from Chlamydia trachomatis serovar D (strain ATCC VR-885 / DSM 19411 / UW-3/Cx).